Reading from the N-terminus, the 1483-residue chain is Cystic fibrosis transmembrane conductance regulator (1483 aa).

Residues 1 to 77 (MQRSPLEKAS…KLINALRRCF (77 aa)) lie on the Cytoplasmic side of the membrane. The chain crosses the membrane as a helical span at residues 78-98 (FWRFAFYGILLYLGEVTKAVQ). The ABC transmembrane type-1 1 domain occupies 81-365 (FAFYGILLYL…WAVQTWYDSL (285 aa)). Residues 99–122 (PLLLGRIIASYDPDNKQERSIAIY) lie on the Extracellular side of the membrane. Residues 123 to 146 (LAIGLCLLFIMRPLLLHPAIFGLH) form a helical membrane-spanning segment. The Cytoplasmic segment spans residues 147–195 (HIGMQIRIAMFSLIYKKTLKLSSRVLDKISIGQLVSLLSNNLNKFDEGL). A helical transmembrane segment spans residues 196–216 (ALAHFVWIAPLQVTLLMGLLW). The Extracellular segment spans residues 217–222 (DLLQAS). The helical transmembrane segment at 223 to 243 (AFCGLAFLIVLALVQAGLGRM) threads the bilayer. Topologically, residues 244-298 (IMKYRDQRAGKINERLVITSEVIENIQSVKAYCWEEAMEKIIENIRQTELKLTRK) are cytoplasmic. The helical transmembrane segment at 299–319 (AAHVRYFNSSAFFFSGFFVVS) threads the bilayer. At 320 to 339 (LSVLPYALIKTIILRKIFTT) the chain is on the extracellular side. The chain crosses the membrane as a helical span at residues 340–358 (ISFCIVLRMAVTRQFPWAV). At 359–859 (QTWYDSLGAI…YLRYITVHKN (501 aa)) the chain is on the cytoplasmic side. ATP contacts are provided by residues Trp401, Ser434, 458–465 (GSTGAGKT), and Gln493. In terms of domain architecture, ABC transporter 1 spans 423–646 (NGDNSLFFSN…RPDFSSKLMG (224 aa)). The S-palmitoyl cysteine moiety is linked to residue Cys524. Ser549 and Ser660 each carry phosphoserine. Residues 654–832 (SPERRNSIIT…EEINEEDLKE (179 aa)) form a disordered R region region. Ser670 bears the Phosphoserine; by PKA mark. Ser686 carries the post-translational modification Phosphoserine. Lys688 participates in a covalent cross-link: Glycyl lysine isopeptide (Lys-Gly) (interchain with G-Cter in ubiquitin). 2 positions are modified to phosphoserine: Ser700 and Ser712. A Phosphothreonine modification is found at Thr717. Phosphoserine is present on residues Ser737, Ser768, Ser791, Ser796, and Ser814. The chain crosses the membrane as a helical span at residues 860 to 880 (LIFVLIWCLVIFLAEVAVSLV). An ABC transmembrane type-1 2 domain is found at 860 to 1156 (LIFVLIWCLV…AVNSSIEVDS (297 aa)). Residues 881–919 (VLWILRNLSSQDKGNSTQSVNSSYAVIFTSTSAYYIFYI) are Extracellular-facing. Residues Asn887, Asn895, and Asn901 are each glycosylated (N-linked (GlcNAc...) asparagine). The discontinuously helical transmembrane segment at 920–940 (YVGVADTLLALGLFRGLPLVH) threads the bilayer. Over 941 to 991 (TLITVSKILHHKMLHSVLQAPMSTLNTLKAGGILNRFSKDIAILDDLLPLT) the chain is Cytoplasmic. A helical membrane pass occupies residues 992–1012 (IFDFIQLLLIVIGAVAVVSVL). The Extracellular portion of the chain corresponds to 1013–1014 (QP). A helical transmembrane segment spans residues 1015–1035 (YIFLATVPVIAAFIILRAYFL). The Cytoplasmic segment spans residues 1036–1096 (HTSQQLKQLE…TANWFLYLST (61 aa)). The chain crosses the membrane as a helical span at residues 1097–1117 (LRWFQMRMEIIFVIFFIAVTF). The Extracellular portion of the chain corresponds to 1118-1131 (ISILTTGEGEGTVG). Residues 1132–1152 (IILTLAMNIMGTLQWAVNSSI) traverse the membrane as a helical segment. Residues 1153–1483 (EVDSLMRSVS…TEDEVQDTRL (331 aa)) lie on the Cytoplasmic side of the membrane. The ABC transporter 2 domain occupies 1213–1446 (MTVKDLTAKY…RSAFRQAIGP (234 aa)). ATP-binding positions include Tyr1222 and 1247–1254 (GRTGSGKS). The segment at 1389 to 1483 (RTLKQAFADC…TEDEVQDTRL (95 aa)) is interaction with GORASP2. Cys1398 carries S-palmitoyl cysteine lipidation. The disordered stretch occupies residues 1444–1483 (IGPPERPGLLPHRLSSRQRSPSRIAALKEETEDEVQDTRL). The residue at position 1459 (Ser1459) is a Phosphoserine. Over residues 1473–1483 (ETEDEVQDTRL) the composition is skewed to acidic residues. A PDZ-binding motif is present at residues 1481-1483 (TRL).

Belongs to the ABC transporter superfamily. ABCC family. CFTR transporter (TC 3.A.1.202) subfamily. Monomer; does not require oligomerization for channel activity. May form oligomers in the membrane. Interacts with SLC26A3, SLC26A6 and NHERF1. Interacts with SHANK2. Interacts with MYO6. Interacts (via C-terminus) with GOPC (via PDZ domain); this promotes CFTR internalization and thereby decreases channel activity. Interacts with SLC4A7 through NHERF1. Found in a complex with MYO5B and RAB11A. Interacts with ANO1. Interacts with SLC26A8. Interacts with AHCYL1; the interaction increases CFTR activity. Interacts with CSE1L. The core-glycosylated form interacts with GORASP2 (via PDZ GRASP-type 1 domain) in respone to ER stress. Interacts with MARCHF2; the interaction leads to CFTR ubiqtuitination and degradation. Interacts with ADGRG2. Post-translationally, N-glycosylated. Phosphorylated; cAMP treatment promotes phosphorylation and activates the channel. Dephosphorylation decreases the ATPase activity (in vitro). Phosphorylation at PKA sites activates the channel. Phosphorylation at PKC sites enhances the response to phosphorylation by PKA. Phosphorylated by AMPK; this inhibits channel activity. In terms of processing, ubiquitinated, leading to its degradation in the lysosome. Deubiquitination by USP10 in early endosomes enhances its endocytic recycling to the cell membrane. Ubiquitinated by RNF185 during ER stress. Ubiquitinated by MARCHF2.

It is found in the apical cell membrane. It localises to the early endosome membrane. The protein localises to the cell membrane. The protein resides in the recycling endosome membrane. Its subcellular location is the endoplasmic reticulum membrane. It is found in the nucleus. The catalysed reaction is ATP + H2O + closed Cl(-) channel = ADP + phosphate + open Cl(-) channel.. It carries out the reaction chloride(in) = chloride(out). It catalyses the reaction hydrogencarbonate(in) = hydrogencarbonate(out). The enzyme catalyses ATP + H2O = ADP + phosphate + H(+). In terms of biological role, epithelial ion channel that plays an important role in the regulation of epithelial ion and water transport and fluid homeostasis. Mediates the transport of chloride ions across the cell membrane. Possesses an intrinsic ATPase activity and utilizes ATP to gate its channel; the passive flow of anions through the channel is gated by cycles of ATP binding and hydrolysis by the ATP-binding domains. The ion channel is also permeable to HCO(3)(-); selectivity depends on the extracellular chloride concentration. Exerts its function also by modulating the activity of other ion channels and transporters. Contributes to the regulation of the pH and the ion content of the epithelial fluid layer. Modulates the activity of the epithelial sodium channel (ENaC) complex, in part by regulating the cell surface expression of the ENaC complex. May regulate bicarbonate secretion and salvage in epithelial cells by regulating the transporter SLC4A7. Can inhibit the chloride channel activity of ANO1. Plays a role in the chloride and bicarbonate homeostasis during sperm epididymal maturation and capacitation. This chain is Cystic fibrosis transmembrane conductance regulator, found in Canis lupus familiaris (Dog).